The chain runs to 154 residues: Myoglobin (154 aa).

Residues 2–148 form the Globin domain; that stretch reads GLSDGEWQLV…FRNDIAAKYK (147 aa). S4 is modified (phosphoserine). H65 contributes to the nitrite binding site. H65 is an O2 binding site. Residue T68 is modified to Phosphothreonine. Residue H94 participates in heme b binding.

It belongs to the globin family. In terms of assembly, monomeric.

The protein resides in the cytoplasm. The protein localises to the sarcoplasm. It carries out the reaction Fe(III)-heme b-[protein] + nitric oxide + H2O = Fe(II)-heme b-[protein] + nitrite + 2 H(+). The enzyme catalyses H2O2 + AH2 = A + 2 H2O. Its function is as follows. Monomeric heme protein which primary function is to store oxygen and facilitate its diffusion within muscle tissues. Reversibly binds oxygen through a pentacoordinated heme iron and enables its timely and efficient release as needed during periods of heightened demand. Depending on the oxidative conditions of tissues and cells, and in addition to its ability to bind oxygen, it also has a nitrite reductase activity whereby it regulates the production of bioactive nitric oxide. Under stress conditions, like hypoxia and anoxia, it also protects cells against reactive oxygen species thanks to its pseudoperoxidase activity. The chain is Myoglobin (MB) from Ondatra zibethicus (Muskrat).